Consider the following 397-residue polypeptide: Succinate--CoA ligase [ADP-forming] subunit beta (397 aa).

An ATP-grasp domain is found at 9 to 254 (KALLKGYGAP…ETEEDAKEIE (246 aa)). ATP-binding positions include lysine 46, 53–55 (GRG), glutamate 109, alanine 112, and glutamate 117. Residues asparagine 209 and aspartate 223 each contribute to the Mg(2+) site. Residues asparagine 274 and 331–333 (GIM) contribute to the substrate site.

Belongs to the succinate/malate CoA ligase beta subunit family. As to quaternary structure, heterotetramer of two alpha and two beta subunits. The cofactor is Mg(2+).

It carries out the reaction succinate + ATP + CoA = succinyl-CoA + ADP + phosphate. The catalysed reaction is GTP + succinate + CoA = succinyl-CoA + GDP + phosphate. It functions in the pathway carbohydrate metabolism; tricarboxylic acid cycle; succinate from succinyl-CoA (ligase route): step 1/1. Succinyl-CoA synthetase functions in the citric acid cycle (TCA), coupling the hydrolysis of succinyl-CoA to the synthesis of either ATP or GTP and thus represents the only step of substrate-level phosphorylation in the TCA. The beta subunit provides nucleotide specificity of the enzyme and binds the substrate succinate, while the binding sites for coenzyme A and phosphate are found in the alpha subunit. The sequence is that of Succinate--CoA ligase [ADP-forming] subunit beta from Rhizobium etli (strain ATCC 51251 / DSM 11541 / JCM 21823 / NBRC 15573 / CFN 42).